Consider the following 75-residue polypeptide: Peptide Ctri10036 (75 aa).

The signal sequence occupies residues 1-22 (MNSKYLFVFLILNVIFIDLCQG). A Lysine amide modification is found at Lys41. A propeptide spanning residues 47–75 (ELGSQYDYLQDFRKRELDLDDLLSKFPDY) is cleaved from the precursor.

This sequence belongs to the non-disulfide-bridged peptide (NDBP) superfamily. Short antimicrobial peptide (group 4) family. Expressed by the venom gland.

It localises to the secreted. The chain is Peptide Ctri10036 from Chaerilus tricostatus (Scorpion).